A 129-amino-acid polypeptide reads, in one-letter code: Putative zinc finger protein 702 (129 aa).

3 consecutive C2H2-type zinc fingers follow at residues 34–56 (YKCDICGKVFNQKRYLAYHHRCH), 62–84 (YKCNQCGKTFSYKSSLVIHKAIH), and 90–112 (HKCNECGKVFNQKAYLASHHRLH).

This sequence belongs to the krueppel C2H2-type zinc-finger protein family.

The protein resides in the nucleus. Its function is as follows. May be involved in transcriptional regulation. The sequence is that of Putative zinc finger protein 702 (ZNF702P) from Homo sapiens (Human).